The following is a 287-amino-acid chain: Elongation factor Ts (287 aa).

The tract at residues threonine 77–valine 80 is involved in Mg(2+) ion dislocation from EF-Tu.

The protein belongs to the EF-Ts family.

The protein localises to the cytoplasm. Functionally, associates with the EF-Tu.GDP complex and induces the exchange of GDP to GTP. It remains bound to the aminoacyl-tRNA.EF-Tu.GTP complex up to the GTP hydrolysis stage on the ribosome. The sequence is that of Elongation factor Ts from Wolbachia sp. subsp. Brugia malayi (strain TRS).